Here is a 660-residue protein sequence, read N- to C-terminus: Acetyl-coenzyme A synthetase (660 aa).

CoA-binding positions include 197–200 (RGGK) and threonine 317. Residues 397 to 399 (GEP), 421 to 426 (DTFWQT), aspartate 512, and arginine 528 contribute to the ATP site. Serine 536 provides a ligand contact to CoA. An ATP-binding site is contributed by arginine 539. Mg(2+) contacts are provided by valine 550 and valine 555. Position 625 is an N6-acetyllysine (lysine 625).

The protein belongs to the ATP-dependent AMP-binding enzyme family. The cofactor is Mg(2+). Post-translationally, acetylated. Deacetylation by the SIR2-homolog deacetylase activates the enzyme.

It catalyses the reaction acetate + ATP + CoA = acetyl-CoA + AMP + diphosphate. Its function is as follows. Catalyzes the conversion of acetate into acetyl-CoA (AcCoA), an essential intermediate at the junction of anabolic and catabolic pathways. AcsA undergoes a two-step reaction. In the first half reaction, AcsA combines acetate with ATP to form acetyl-adenylate (AcAMP) intermediate. In the second half reaction, it can then transfer the acetyl group from AcAMP to the sulfhydryl group of CoA, forming the product AcCoA. The polypeptide is Acetyl-coenzyme A synthetase (Cupriavidus taiwanensis (strain DSM 17343 / BCRC 17206 / CCUG 44338 / CIP 107171 / LMG 19424 / R1) (Ralstonia taiwanensis (strain LMG 19424))).